Reading from the N-terminus, the 1392-residue chain is ATP-dependent helicase/nuclease subunit A (1392 aa).

The UvrD-like helicase ATP-binding domain occupies 4–595 (FKPTPAQSKA…IVLGENFRSM (592 aa)). Residue 25–32 (ASAGSGKT) coordinates ATP. The region spanning 623–929 (AHLKYAATYY…NVMTIHGSKG (307 aa)) is the UvrD-like helicase C-terminal domain.

It belongs to the helicase family. AddA subfamily. As to quaternary structure, heterodimer of AddA and AddB/RexB. It depends on Mg(2+) as a cofactor.

The catalysed reaction is Couples ATP hydrolysis with the unwinding of duplex DNA by translocating in the 3'-5' direction.. The enzyme catalyses ATP + H2O = ADP + phosphate + H(+). The heterodimer acts as both an ATP-dependent DNA helicase and an ATP-dependent, dual-direction single-stranded exonuclease. Recognizes the chi site generating a DNA molecule suitable for the initiation of homologous recombination. The AddA nuclease domain is required for chi fragment generation; this subunit has the helicase and 3' -&gt; 5' nuclease activities. In Limosilactobacillus reuteri subsp. reuteri (strain JCM 1112) (Lactobacillus reuteri), this protein is ATP-dependent helicase/nuclease subunit A.